The following is an 873-amino-acid chain: Bifunctional uridylyltransferase/uridylyl-removing enzyme (873 aa).

The segment at 1–332 is uridylyltransferase; the sequence is MKYLSPLSLS…HQGEQDDAII (332 aa). The segment at 333 to 692 is uridylyl-removing; the sequence is IDDDFQRRGR…ISKNASRGGT (360 aa). Residues 451–573 form the HD domain; that stretch reads VDEHSIRLLK…VRDEERLDYL (123 aa). ACT domains follow at residues 693-777 and 800-873; these read EIFV…RPPR and LMEF…RLSS.

The protein belongs to the GlnD family. It depends on Mg(2+) as a cofactor.

The catalysed reaction is [protein-PII]-L-tyrosine + UTP = [protein-PII]-uridylyl-L-tyrosine + diphosphate. The enzyme catalyses [protein-PII]-uridylyl-L-tyrosine + H2O = [protein-PII]-L-tyrosine + UMP + H(+). Uridylyltransferase (UTase) activity is inhibited by glutamine, while glutamine activates uridylyl-removing (UR) activity. Modifies, by uridylylation and deuridylylation, the PII regulatory proteins (GlnB and homologs), in response to the nitrogen status of the cell that GlnD senses through the glutamine level. Under low glutamine levels, catalyzes the conversion of the PII proteins and UTP to PII-UMP and PPi, while under higher glutamine levels, GlnD hydrolyzes PII-UMP to PII and UMP (deuridylylation). Thus, controls uridylylation state and activity of the PII proteins, and plays an important role in the regulation of nitrogen assimilation and metabolism. In Aliivibrio fischeri (strain ATCC 700601 / ES114) (Vibrio fischeri), this protein is Bifunctional uridylyltransferase/uridylyl-removing enzyme.